A 322-amino-acid polypeptide reads, in one-letter code: ATP-dependent 6-phosphofructokinase (322 aa).

Gly-12 contributes to the ATP binding site. 22–26 (RATAK) lines the ADP pocket. Residues 73-74 (RS) and 103-106 (GDGS) contribute to the ATP site. Asp-104 provides a ligand contact to Mg(2+). Substrate is bound at residue 127–129 (TID). Asp-129 serves as the catalytic Proton acceptor. Arg-156 contributes to the ADP binding site. Residues Arg-164 and 171–173 (MGR) contribute to the substrate site. ADP-binding positions include 187–189 (GGD) and 215–217 (KLH). Residues Glu-224, Arg-245, and 251-254 (HIQR) contribute to the substrate site.

This sequence belongs to the phosphofructokinase type A (PFKA) family. ATP-dependent PFK group I subfamily. Prokaryotic clade 'B1' sub-subfamily. In terms of assembly, homotetramer. Mg(2+) serves as cofactor.

It is found in the cytoplasm. It catalyses the reaction beta-D-fructose 6-phosphate + ATP = beta-D-fructose 1,6-bisphosphate + ADP + H(+). Its pathway is carbohydrate degradation; glycolysis; D-glyceraldehyde 3-phosphate and glycerone phosphate from D-glucose: step 3/4. With respect to regulation, allosterically activated by ADP and other diphosphonucleosides, and allosterically inhibited by phosphoenolpyruvate. Its function is as follows. Catalyzes the phosphorylation of D-fructose 6-phosphate to fructose 1,6-bisphosphate by ATP, the first committing step of glycolysis. This is ATP-dependent 6-phosphofructokinase from Fusobacterium nucleatum subsp. nucleatum (strain ATCC 25586 / DSM 15643 / BCRC 10681 / CIP 101130 / JCM 8532 / KCTC 2640 / LMG 13131 / VPI 4355).